The following is a 143-amino-acid chain: uncharacterized protein (143 aa).

The segment at 13–143 is disordered; that stretch reads SLQFPHHRPG…QDAAHQCRIQ (131 aa). Over residues 17–31 the composition is skewed to basic residues; it reads PHHRPGLRRHRKNTT. Composition is skewed to basic and acidic residues over residues 35–48, 84–96, and 112–133; these read AAVD…RGDA, DGRE…AEEK, and EKQH…DHAG. Low complexity predominate over residues 134–143; that stretch reads QDAAHQCRIQ.

This is an uncharacterized protein from Homo sapiens (Human).